Consider the following 478-residue polypeptide: Glycogen synthase (478 aa).

Lysine 15 serves as a coordination point for ADP-alpha-D-glucose.

It belongs to the glycosyltransferase 1 family. Bacterial/plant glycogen synthase subfamily.

It catalyses the reaction [(1-&gt;4)-alpha-D-glucosyl](n) + ADP-alpha-D-glucose = [(1-&gt;4)-alpha-D-glucosyl](n+1) + ADP + H(+). The protein operates within glycan biosynthesis; glycogen biosynthesis. Synthesizes alpha-1,4-glucan chains using ADP-glucose. The sequence is that of Glycogen synthase from Streptococcus uberis (strain ATCC BAA-854 / 0140J).